We begin with the raw amino-acid sequence, 197 residues long: Auxin-responsive protein IAA31 (197 aa).

Disordered regions lie at residues 1–43 (MENL…DQAK) and 66–90 (SCLQ…ETQQ). Residues 9–13 (LRLGL) carry the EAR-like (transcriptional repression) motif. The 88-residue stretch at 99–186 (GLFVKVSMDG…TCKRLRIMKG (88 aa)) folds into the PB1 domain.

Belongs to the Aux/IAA family. In terms of assembly, homodimers and heterodimers. In terms of tissue distribution, highly expressed in etiolated seedlings. Expressed in roots.

The protein resides in the nucleus. Functionally, aux/IAA proteins are short-lived transcriptional factors that function as repressors of early auxin response genes at low auxin concentrations. The sequence is that of Auxin-responsive protein IAA31 (IAA31) from Oryza sativa subsp. japonica (Rice).